The primary structure comprises 30 residues: MISDIQIMVALFAALFTGILALRLGTELYK.

A helical transmembrane segment spans residues 7-26; the sequence is IMVALFAALFTGILALRLGT.

The protein belongs to the PsaM family.

It localises to the plastid. It is found in the chloroplast thylakoid membrane. This chain is Photosystem I reaction center subunit XII, found in Mesostigma viride (Green alga).